We begin with the raw amino-acid sequence, 188 residues long: Peptide deformylase (188 aa).

C94 and H136 together coordinate Fe cation. The active site involves E137. H140 is a binding site for Fe cation.

Belongs to the polypeptide deformylase family. It depends on Fe(2+) as a cofactor.

The catalysed reaction is N-terminal N-formyl-L-methionyl-[peptide] + H2O = N-terminal L-methionyl-[peptide] + formate. In terms of biological role, removes the formyl group from the N-terminal Met of newly synthesized proteins. Requires at least a dipeptide for an efficient rate of reaction. N-terminal L-methionine is a prerequisite for activity but the enzyme has broad specificity at other positions. The sequence is that of Peptide deformylase from Pelodictyon phaeoclathratiforme (strain DSM 5477 / BU-1).